The sequence spans 383 residues: G-protein coupled receptor E1 (383 aa).

9 helical membrane passes run 13–35 (SSLA…TTIA), 78–98 (LYLL…IIVI), 109–129 (MLLL…PFWM), 160–180 (VFCI…AVTA), 190–210 (IVTC…EFFF), 242–262 (VIML…YVII), 279–299 (LIFV…IVLL), 323–343 (LITK…YAFV), and 351–371 (LYHF…PFLS). Cysteine 145 and cysteine 222 are disulfide-bonded.

This sequence belongs to the G-protein coupled receptor 1 family.

It localises to the host membrane. In Equine herpesvirus 2 (strain 86/87) (EHV-2), this protein is G-protein coupled receptor E1 (E1).